Here is a 409-residue protein sequence, read N- to C-terminus: Effector protein BipC (409 aa).

Disordered stretches follow at residues 268–287 (RETG…RMSD) and 330–396 (SGGQ…VAND). Over residues 360-369 (AQQTAMAAAS) the composition is skewed to low complexity. A compositionally biased stretch (basic and acidic residues) spans 370 to 382 (ARDEAAHRGRDAA).

It belongs to the SctB/SipC family.

It is found in the secreted. The chain is Effector protein BipC (bipC) from Burkholderia thailandensis (strain ATCC 700388 / DSM 13276 / CCUG 48851 / CIP 106301 / E264).